The following is a 91-amino-acid chain: Small ribosomal subunit protein uS19 (91 aa).

Belongs to the universal ribosomal protein uS19 family.

In terms of biological role, protein S19 forms a complex with S13 that binds strongly to the 16S ribosomal RNA. The chain is Small ribosomal subunit protein uS19 from Aromatoleum aromaticum (strain DSM 19018 / LMG 30748 / EbN1) (Azoarcus sp. (strain EbN1)).